The primary structure comprises 282 residues: Biotin synthase (282 aa).

Residues 1-228 (MQEIFLCSIS…NARLMVAGGR (228 aa)) enclose the Radical SAM core domain. Residues Cys-17, Cys-21, and Cys-24 each coordinate [4Fe-4S] cluster. Residues Cys-61, Cys-96, Cys-154, and Arg-221 each coordinate [2Fe-2S] cluster.

It belongs to the radical SAM superfamily. Biotin synthase family. As to quaternary structure, homodimer. The cofactor is [4Fe-4S] cluster. [2Fe-2S] cluster is required as a cofactor.

It catalyses the reaction (4R,5S)-dethiobiotin + (sulfur carrier)-SH + 2 reduced [2Fe-2S]-[ferredoxin] + 2 S-adenosyl-L-methionine = (sulfur carrier)-H + biotin + 2 5'-deoxyadenosine + 2 L-methionine + 2 oxidized [2Fe-2S]-[ferredoxin]. It functions in the pathway cofactor biosynthesis; biotin biosynthesis; biotin from 7,8-diaminononanoate: step 2/2. Its function is as follows. Catalyzes the conversion of dethiobiotin (DTB) to biotin by the insertion of a sulfur atom into dethiobiotin via a radical-based mechanism. This chain is Biotin synthase, found in Helicobacter pylori (strain ATCC 700392 / 26695) (Campylobacter pylori).